The sequence spans 156 residues: 2-C-methyl-D-erythritol 2,4-cyclodiphosphate synthase (156 aa).

A divalent metal cation-binding residues include Asp-9 and His-11. Residues 9 to 11 (DAH) and 36 to 37 (HS) contribute to the 4-CDP-2-C-methyl-D-erythritol 2-phosphate site. His-44 contributes to the a divalent metal cation binding site. Residue 58–60 (NIG) participates in 4-CDP-2-C-methyl-D-erythritol 2-phosphate binding.

It belongs to the IspF family. As to quaternary structure, homotrimer. It depends on a divalent metal cation as a cofactor.

The catalysed reaction is 4-CDP-2-C-methyl-D-erythritol 2-phosphate = 2-C-methyl-D-erythritol 2,4-cyclic diphosphate + CMP. Its pathway is isoprenoid biosynthesis; isopentenyl diphosphate biosynthesis via DXP pathway; isopentenyl diphosphate from 1-deoxy-D-xylulose 5-phosphate: step 4/6. Functionally, involved in the biosynthesis of isopentenyl diphosphate (IPP) and dimethylallyl diphosphate (DMAPP), two major building blocks of isoprenoid compounds. Catalyzes the conversion of 4-diphosphocytidyl-2-C-methyl-D-erythritol 2-phosphate (CDP-ME2P) to 2-C-methyl-D-erythritol 2,4-cyclodiphosphate (ME-CPP) with a corresponding release of cytidine 5-monophosphate (CMP). The protein is 2-C-methyl-D-erythritol 2,4-cyclodiphosphate synthase of Kosmotoga olearia (strain ATCC BAA-1733 / DSM 21960 / TBF 19.5.1).